Reading from the N-terminus, the 309-residue chain is Maintenance of mitochondrial morphology protein 1 (309 aa).

The Lumenal portion of the chain corresponds to 1-16 (MGNAYIFSLQPTFTQG). The chain crosses the membrane as a helical span at residues 17–37 (LILGQFSILFLLVLVLKYLFF). Topologically, residues 38-309 (DTVSDHAYRT…EQQAGELPVN (272 aa)) are cytoplasmic. Residues 84 to 293 (ECESADWLNA…LPGLASVSEV (210 aa)) form the SMP-LTD domain.

Belongs to the MMM1 family. As to quaternary structure, homodimer. Component of the ER-mitochondria encounter structure (ERMES) or MDM complex, composed of MMM1, MDM10, MDM12 and MDM34. An MMM1 homodimer associates with one molecule of MDM12 on each side in a pairwise head-to-tail manner, and the SMP-LTD domains of MMM1 and MDM12 generate a continuous hydrophobic tunnel for phospholipid trafficking.

The protein resides in the endoplasmic reticulum membrane. In terms of biological role, component of the ERMES/MDM complex, which serves as a molecular tether to connect the endoplasmic reticulum (ER) and mitochondria. Components of this complex are involved in the control of mitochondrial shape and protein biogenesis, and function in nonvesicular lipid trafficking between the ER and mitochondria. The MDM12-MMM1 subcomplex functions in the major beta-barrel assembly pathway that is responsible for biogenesis of all outer membrane beta-barrel proteins, and acts in a late step after the SAM complex. The MDM10-MDM12-MMM1 subcomplex further acts in the TOM40-specific pathway after the action of the MDM12-MMM1 complex. Essential for establishing and maintaining the structure of mitochondria and maintenance of mtDNA nucleoids. The sequence is that of Maintenance of mitochondrial morphology protein 1 from Postia placenta (strain ATCC 44394 / Madison 698-R) (Brown rot fungus).